A 764-amino-acid polypeptide reads, in one-letter code: Tyrosine-protein phosphatase corkscrew (764 aa).

Positions 1-95 constitute an SH2 domain; sequence WFHGNLSGKE…GTVVHLRQPF (95 aa). Residues 117–522 enclose the Tyrosine-protein phosphatase domain; the sequence is FWEEFESLQQ…KFVYYAVQHY (406 aa). A PTPase insert (Cys/Ser-rich) region spans residues 174 to 325; sequence IRLPTDGDLY…LNGEGNQFKT (152 aa). Positions 246-273 are disordered; that stretch reads SKHKRSESMSASANASAAGTGPGTPTAA. Over residues 255-273 the composition is skewed to low complexity; that stretch reads SASANASAAGTGPGTPTAA. Substrate-binding positions include Asp422, 460–466, and Gln507; that span reads CSAGIGR. Residue Cys460 is the Phosphocysteine intermediate of the active site. The segment at 599-666 is disordered; that stretch reads AAKLQPPLPP…NANGNGNILG (68 aa). Positions 612–666 are enriched in low complexity; the sequence is SNNNNSSGNSGSYCNSSSSTSTAQHNGVVSSSNNCSSGSGSANSSNANGNGNILG.

Belongs to the protein-tyrosine phosphatase family. Non-receptor class subfamily.

The protein resides in the cytoplasm. It catalyses the reaction O-phospho-L-tyrosyl-[protein] + H2O = L-tyrosyl-[protein] + phosphate. Its function is as follows. Required in all receptor tyrosine kinase signaling pathways. Functions downstream of the receptor tyrosine kinase torso, acting in concert with D-Raf via tailless. Also functions downstream of Egfr (epidermal growth factor receptor) and btl (fibroblast growth factor receptor). The SH2 domain suggests that csw effects its role by mediating heteromeric protein interactions. Maternally required for normal determination of cell fates at the termini of the embryo. Required for cell fate specification of the ventral ectoderm, in the developing embryonic CNS and for embryonic tracheal cell migration. Functions during imaginal development for proper formation of adult structures such as eyes, aristae, L5 wing vein and the tarsal claw. The sequence is that of Tyrosine-protein phosphatase corkscrew (csw) from Drosophila virilis (Fruit fly).